Reading from the N-terminus, the 410-residue chain is NADH-quinone oxidoreductase subunit H (410 aa).

A run of 9 helical transmembrane segments spans residues 11–31 (LVAA…LVAI), 79–99 (FVYF…FAFI), 119–139 (LPVA…GIVL), 160–180 (VISY…MAGT), 192–212 (GVWY…SMVG), 257–277 (ALAA…NMWA), 283–303 (WWPL…YFWL), 317–337 (ALGW…AAII), and 347–367 (YWTP…VLLL). Residues 376-410 (ARASARQRGDEGTSPEPAFPTPPLLAGATKENAGG) are disordered.

The protein belongs to the complex I subunit 1 family. In terms of assembly, NDH-1 is composed of 14 different subunits. Subunits NuoA, H, J, K, L, M, N constitute the membrane sector of the complex.

Its subcellular location is the cell membrane. It catalyses the reaction a quinone + NADH + 5 H(+)(in) = a quinol + NAD(+) + 4 H(+)(out). NDH-1 shuttles electrons from NADH, via FMN and iron-sulfur (Fe-S) centers, to quinones in the respiratory chain. The immediate electron acceptor for the enzyme in this species is believed to be menaquinone. Couples the redox reaction to proton translocation (for every two electrons transferred, four hydrogen ions are translocated across the cytoplasmic membrane), and thus conserves the redox energy in a proton gradient. The chain is NADH-quinone oxidoreductase subunit H from Mycobacterium bovis (strain ATCC BAA-935 / AF2122/97).